The chain runs to 121 residues: Large ribosomal subunit protein bL21 (121 aa).

The protein belongs to the bacterial ribosomal protein bL21 family. As to quaternary structure, part of the 50S ribosomal subunit. Contacts protein L20.

This protein binds to 23S rRNA in the presence of protein L20. This chain is Large ribosomal subunit protein bL21, found in Synechococcus sp. (strain CC9605).